The sequence spans 162 residues: uncharacterized protein (162 aa).

The next 4 membrane-spanning stretches (helical) occupy residues 10–30 (ILSF…MLIL), 50–70 (IVEL…ALYN), 96–116 (IAQY…IILL), and 125–145 (FTAI…LFIF).

The protein resides in the cell membrane. This is an uncharacterized protein from Methanocaldococcus jannaschii (strain ATCC 43067 / DSM 2661 / JAL-1 / JCM 10045 / NBRC 100440) (Methanococcus jannaschii).